We begin with the raw amino-acid sequence, 244 residues long: Cell division protein ZapD (244 aa).

Belongs to the ZapD family. In terms of assembly, interacts with FtsZ.

It localises to the cytoplasm. In terms of biological role, cell division factor that enhances FtsZ-ring assembly. Directly interacts with FtsZ and promotes bundling of FtsZ protofilaments, with a reduction in FtsZ GTPase activity. This Shewanella sp. (strain MR-7) protein is Cell division protein ZapD.